Reading from the N-terminus, the 1869-residue chain is Chitin synthase 6 (1869 aa).

Residues 1–23 are disordered; the sequence is MAMNLPPLAGSGGAHTQPSLPAL. A Myosin motor domain is found at 1-778; it reads MAMNLPPLAG…EIAHLSEASL (778 aa). 104 to 111 is an ATP binding site; the sequence is GESGSGKS. N-linked (GlcNAc...) asparagine glycosylation is found at Asn123, Asn417, Asn426, and Asn557. Disordered stretches follow at residues 593–612 and 620–640; these read KPMR…ARNQ and AEEE…AAKA. The span at 629-640 shows a compositional bias: low complexity; sequence ENNSQAGGAAKA. 2 N-linked (GlcNAc...) asparagine glycosylation sites follow: Asn630 and Asn657. Residues 655 to 679 are actin-binding; it reads LDNVTKAVADPSTNSYFVFCLKPND. 2 helical membrane-spanning segments follow: residues 886 to 906 and 925 to 945; these read WLFM…RFIG and LIIW…PMLI. The Cytochrome b5 heme-binding domain occupies 949 to 1010; that stretch reads QHVYSAAELS…YAGKDATSLF (62 aa). N-linked (GlcNAc...) asparagine glycans are attached at residues Asn1037, Asn1062, and Asn1165. Residues 1201 to 1221 form a helical membrane-spanning segment; the sequence is LVLAISIMLVTIIAFKFFAAL. Asn1458 and Asn1564 each carry an N-linked (GlcNAc...) asparagine glycan. 3 consecutive transmembrane segments (helical) span residues 1596–1616, 1622–1642, and 1649–1669; these read LSTV…VMVI, VPVT…IIFI, and MIGW…GLPL. N-linked (GlcNAc...) asparagine glycosylation is present at Asn1778. Residues 1811 to 1866 form the DEK-C domain; it reads LPSDDALLAEIREILRTADLMTVTKKGIKQELERRFGVPLDAKRAYINSATEALLS.

It in the N-terminal section; belongs to the TRAFAC class myosin-kinesin ATPase superfamily. Myosin family. This sequence in the C-terminal section; belongs to the chitin synthase family. Class V subfamily.

It localises to the cell membrane. The catalysed reaction is [(1-&gt;4)-N-acetyl-beta-D-glucosaminyl](n) + UDP-N-acetyl-alpha-D-glucosamine = [(1-&gt;4)-N-acetyl-beta-D-glucosaminyl](n+1) + UDP + H(+). Functionally, polymerizes chitin, a structural polymer of the cell wall and septum, by transferring the sugar moiety of UDP-GlcNAc to the non-reducing end of the growing chitin polymer. Plays a role in cell wall integrity and is involved in tolerance to hyperosmotic conditions. Required to successfully penetrate the host plants and thus plays a key role in pathogenicity. The chain is Chitin synthase 6 from Verticillium dahliae (strain VdLs.17 / ATCC MYA-4575 / FGSC 10137) (Verticillium wilt).